The following is a 222-amino-acid chain: GTP cyclohydrolase 1 (222 aa).

Positions 111, 114, and 182 each coordinate Zn(2+).

This sequence belongs to the GTP cyclohydrolase I family. In terms of assembly, toroid-shaped homodecamer, composed of two pentamers of five dimers.

The catalysed reaction is GTP + H2O = 7,8-dihydroneopterin 3'-triphosphate + formate + H(+). It participates in cofactor biosynthesis; 7,8-dihydroneopterin triphosphate biosynthesis; 7,8-dihydroneopterin triphosphate from GTP: step 1/1. The chain is GTP cyclohydrolase 1 from Enterobacter sp. (strain 638).